Reading from the N-terminus, the 340-residue chain is GTP 3',8-cyclase (340 aa).

Residues 8-227 form the Radical SAM core domain; it reads KLGRPIRDLR…DMIESHFDIE (220 aa). R17 contacts GTP. [4Fe-4S] cluster is bound by residues C24 and C28. Y30 is a binding site for S-adenosyl-L-methionine. C31 is a [4Fe-4S] cluster binding site. Residue R71 participates in GTP binding. G75 provides a ligand contact to S-adenosyl-L-methionine. T102 is a binding site for GTP. S-adenosyl-L-methionine is bound at residue S126. K163 lines the GTP pocket. An S-adenosyl-L-methionine-binding site is contributed by M197. Positions 261 and 264 each coordinate [4Fe-4S] cluster. GTP is bound at residue 266 to 268; sequence RAR. C278 is a binding site for [4Fe-4S] cluster.

It belongs to the radical SAM superfamily. MoaA family. In terms of assembly, monomer and homodimer. [4Fe-4S] cluster is required as a cofactor.

The enzyme catalyses GTP + AH2 + S-adenosyl-L-methionine = (8S)-3',8-cyclo-7,8-dihydroguanosine 5'-triphosphate + 5'-deoxyadenosine + L-methionine + A + H(+). It participates in cofactor biosynthesis; molybdopterin biosynthesis. Catalyzes the cyclization of GTP to (8S)-3',8-cyclo-7,8-dihydroguanosine 5'-triphosphate. This Staphylococcus haemolyticus (strain JCSC1435) protein is GTP 3',8-cyclase.